Reading from the N-terminus, the 687-residue chain is DNA ligase (687 aa).

NAD(+) is bound by residues 34-38 (DAEYD), 83-84 (SL), and glutamate 117. The active-site N6-AMP-lysine intermediate is the lysine 119. NAD(+) is bound by residues arginine 140, glutamate 182, lysine 298, and lysine 322. Zn(2+) is bound by residues cysteine 416, cysteine 419, cysteine 434, and cysteine 439. Residues 609 to 687 (EARGPFAGKT…EEEFVRLLKE (79 aa)) form the BRCT domain.

This sequence belongs to the NAD-dependent DNA ligase family. LigA subfamily. Requires Mg(2+) as cofactor. The cofactor is Mn(2+).

The catalysed reaction is NAD(+) + (deoxyribonucleotide)n-3'-hydroxyl + 5'-phospho-(deoxyribonucleotide)m = (deoxyribonucleotide)n+m + AMP + beta-nicotinamide D-nucleotide.. DNA ligase that catalyzes the formation of phosphodiester linkages between 5'-phosphoryl and 3'-hydroxyl groups in double-stranded DNA using NAD as a coenzyme and as the energy source for the reaction. It is essential for DNA replication and repair of damaged DNA. The sequence is that of DNA ligase from Anaeromyxobacter dehalogenans (strain 2CP-C).